Here is a 397-residue protein sequence, read N- to C-terminus: Exodeoxyribonuclease 7 large subunit (397 aa).

The protein belongs to the XseA family. As to quaternary structure, heterooligomer composed of large and small subunits.

The protein localises to the cytoplasm. The enzyme catalyses Exonucleolytic cleavage in either 5'- to 3'- or 3'- to 5'-direction to yield nucleoside 5'-phosphates.. In terms of biological role, bidirectionally degrades single-stranded DNA into large acid-insoluble oligonucleotides, which are then degraded further into small acid-soluble oligonucleotides. In Anaplasma marginale (strain St. Maries), this protein is Exodeoxyribonuclease 7 large subunit.